Consider the following 140-residue polypeptide: Nucleoside diphosphate kinase (140 aa).

The ATP site is built by Lys-11, Phe-59, Arg-87, Thr-93, Arg-104, and Asn-114. The active-site Pros-phosphohistidine intermediate is His-117.

The protein belongs to the NDK family. As to quaternary structure, homotetramer. It depends on Mg(2+) as a cofactor.

The protein resides in the cytoplasm. It catalyses the reaction a 2'-deoxyribonucleoside 5'-diphosphate + ATP = a 2'-deoxyribonucleoside 5'-triphosphate + ADP. The enzyme catalyses a ribonucleoside 5'-diphosphate + ATP = a ribonucleoside 5'-triphosphate + ADP. Functionally, major role in the synthesis of nucleoside triphosphates other than ATP. The ATP gamma phosphate is transferred to the NDP beta phosphate via a ping-pong mechanism, using a phosphorylated active-site intermediate. The chain is Nucleoside diphosphate kinase from Gluconobacter oxydans (strain 621H) (Gluconobacter suboxydans).